We begin with the raw amino-acid sequence, 579 residues long: CTP synthase (579 aa).

Positions 1-281 (MPALRKHPQT…DAYVVRRLNL (281 aa)) are amidoligase domain. S23 provides a ligand contact to CTP. S23 is a UTP binding site. Residues 24-29 (SLGKGL) and D81 contribute to the ATP site. Residues D81 and E155 each contribute to the Mg(2+) site. CTP-binding positions include 162–164 (DIE), 202–207 (KTKPTQ), and K238. Residues 202 to 207 (KTKPTQ) and K238 contribute to the UTP site. Residues 306–554 (RIALVGKYID…IGAALDYKAA (249 aa)) form the Glutamine amidotransferase type-1 domain. G369 is an L-glutamine binding site. Residue C396 is the Nucleophile; for glutamine hydrolysis of the active site. L-glutamine-binding positions include 397–400 (LGLQ), E419, and R480. Catalysis depends on residues H527 and E529.

This sequence belongs to the CTP synthase family. Homotetramer.

It catalyses the reaction UTP + L-glutamine + ATP + H2O = CTP + L-glutamate + ADP + phosphate + 2 H(+). The catalysed reaction is L-glutamine + H2O = L-glutamate + NH4(+). The enzyme catalyses UTP + NH4(+) + ATP = CTP + ADP + phosphate + 2 H(+). Its pathway is pyrimidine metabolism; CTP biosynthesis via de novo pathway; CTP from UDP: step 2/2. Allosterically activated by GTP, when glutamine is the substrate; GTP has no effect on the reaction when ammonia is the substrate. The allosteric effector GTP functions by stabilizing the protein conformation that binds the tetrahedral intermediate(s) formed during glutamine hydrolysis. Inhibited by the product CTP, via allosteric rather than competitive inhibition. Catalyzes the ATP-dependent amination of UTP to CTP with either L-glutamine or ammonia as the source of nitrogen. Regulates intracellular CTP levels through interactions with the four ribonucleotide triphosphates. The polypeptide is CTP synthase (Mycobacterium sp. (strain KMS)).